A 323-amino-acid chain; its full sequence is Beta-ketoacyl-[acyl-carrier-protein] synthase III (323 aa).

Catalysis depends on residues C113 and H250. The ACP-binding stretch occupies residues 251-255; sequence QANKR. The active site involves N280.

This sequence belongs to the thiolase-like superfamily. FabH family. In terms of assembly, homodimer.

Its subcellular location is the cytoplasm. It catalyses the reaction malonyl-[ACP] + acetyl-CoA + H(+) = 3-oxobutanoyl-[ACP] + CO2 + CoA. The protein operates within lipid metabolism; fatty acid biosynthesis. Functionally, catalyzes the condensation reaction of fatty acid synthesis by the addition to an acyl acceptor of two carbons from malonyl-ACP. Catalyzes the first condensation reaction which initiates fatty acid synthesis and may therefore play a role in governing the total rate of fatty acid production. Possesses both acetoacetyl-ACP synthase and acetyl transacylase activities. Its substrate specificity determines the biosynthesis of branched-chain and/or straight-chain of fatty acids. This chain is Beta-ketoacyl-[acyl-carrier-protein] synthase III, found in Agrobacterium fabrum (strain C58 / ATCC 33970) (Agrobacterium tumefaciens (strain C58)).